The primary structure comprises 551 residues: Interleukin-2 receptor subunit beta (551 aa).

The signal sequence occupies residues 1–26; it reads MAAPALSWRLPLLILLLPLATSWASA. The Extracellular segment spans residues 27–240; it reads AVNGTSQFTC…TKPAALGKDT (214 aa). Residues Asn29, Asn43, and Asn71 are each glycosylated (N-linked (GlcNAc...) asparagine). 3 disulfide bridges follow: Cys36/Cys46, Cys59/Cys110, and Cys74/Cys86. In terms of domain architecture, Fibronectin type-III spans 134–234; that stretch reads APISLQVVHV…QPLAFRTKPA (101 aa). Residue Asn149 is glycosylated (N-linked (GlcNAc...) asparagine). A WSXWS motif motif is present at residues 220-224; sequence WSPWS. A helical membrane pass occupies residues 241–265; sequence IPWLGHLLVGLSGAFGFIILVYLLI. The Cytoplasmic segment spans residues 266–551; sequence NCRNTGPWLK…LQGQDPTHLV (286 aa). Positions 278–286 match the Box 1 motif motif; the sequence is LKCNTPDPS. Disordered stretches follow at residues 389–416 and 432–486; these read EEDP…GEDD and PSLL…VDFQ.

Belongs to the type I cytokine receptor family. Type 4 subfamily. As to quaternary structure, non-covalent dimer of an alpha and a beta subunit. IL2R exists in 3 different forms: a high affinity dimer, an intermediate affinity monomer (beta subunit), and a low affinity monomer (alpha subunit). The high and intermediate affinity forms also associate with a gamma subunit. Interacts with SHB upon interleukin stimulation. (Microbial infection) Interacts with HTLV-1 accessory protein p12I.

It localises to the cell membrane. Functionally, receptor for interleukin-2. This beta subunit is involved in receptor mediated endocytosis and transduces the mitogenic signals of IL2. Probably in association with IL15RA, involved in the stimulation of neutrophil phagocytosis by IL15. The protein is Interleukin-2 receptor subunit beta of Homo sapiens (Human).